Here is a 418-residue protein sequence, read N- to C-terminus: 1-deoxy-D-xylulose 5-phosphate reductoisomerase (418 aa).

The NADPH site is built by Thr-32, Gly-33, Ser-34, Ile-35, and Asn-150. Lys-151 provides a ligand contact to 1-deoxy-D-xylulose 5-phosphate. Residue Glu-152 coordinates NADPH. Residue Asp-174 coordinates Mn(2+). Positions 175, 176, 200, and 223 each coordinate 1-deoxy-D-xylulose 5-phosphate. Glu-176 is a binding site for Mn(2+). Gly-229 lines the NADPH pocket. Positions 236, 241, 242, and 245 each coordinate 1-deoxy-D-xylulose 5-phosphate. Mn(2+) is bound at residue Glu-245.

This sequence belongs to the DXR family. Mg(2+) is required as a cofactor. Requires Mn(2+) as cofactor.

It carries out the reaction 2-C-methyl-D-erythritol 4-phosphate + NADP(+) = 1-deoxy-D-xylulose 5-phosphate + NADPH + H(+). It participates in isoprenoid biosynthesis; isopentenyl diphosphate biosynthesis via DXP pathway; isopentenyl diphosphate from 1-deoxy-D-xylulose 5-phosphate: step 1/6. Catalyzes the NADPH-dependent rearrangement and reduction of 1-deoxy-D-xylulose-5-phosphate (DXP) to 2-C-methyl-D-erythritol 4-phosphate (MEP). This Streptomyces coelicolor (strain ATCC BAA-471 / A3(2) / M145) protein is 1-deoxy-D-xylulose 5-phosphate reductoisomerase.